Here is a 692-residue protein sequence, read N- to C-terminus: Highly divergent homeobox (692 aa).

Positions 3-63 (LRSVFTVEQQ…NKRRKMSSKS (61 aa)) form a DNA-binding region, homeobox 1. A compositionally biased stretch (polar residues) spans 117-133 (SSSSKQGTTKHTNTQIT). The segment at 117–136 (SSSSKQGTTKHTNTQITEAH) is disordered. Glycyl lysine isopeptide (Lys-Gly) (interchain with G-Cter in SUMO2) cross-links involve residues K137, K142, K146, K165, K174, K196, K214, K223, and K234. Residues 437–500 (ALQDRTQFSD…NRRRKYRLMG (64 aa)) constitute a DNA-binding region (homeobox 2). Disordered stretches follow at residues 505–541 (PPRGGPADFSEQPESGSLSALTPGEEAGPEVGEDNDR) and 647–692 (KDQQ…SDSL). Residues 676 to 692 (TSLSVSSLSEKNASDSL) are compositionally biased toward polar residues.

It is found in the nucleus. The sequence is that of Highly divergent homeobox (Hdx) from Mus musculus (Mouse).